A 68-amino-acid chain; its full sequence is Alpha-conotoxin-like Lp1.2 (68 aa).

Positions 1-21 (MGMRMMFTVFLLVVLATTVVS) are cleaved as a signal peptide. Residues 22–48 (FTSDRAFDGRNAAASDKASDLISLAVR) constitute a propeptide that is removed on maturation. 2 disulfide bridges follow: Cys50–Cys56 and Cys51–Cys64. The interval 52 to 54 (SHP) is ser-Xaa-Pro motif, crucial for potent interaction with nAChR. A Cysteine amide modification is found at Cys64. Residues 65–68 (GGKR) constitute a propeptide that is removed on maturation.

The protein belongs to the conotoxin A superfamily. Expressed by the venom duct.

The protein resides in the secreted. Functionally, alpha-conotoxins act on postsynaptic membranes, they bind to the nicotinic acetylcholine receptors (nAChR) and thus inhibit them. This is Alpha-conotoxin-like Lp1.2 from Conus leopardus (Leopard cone).